An 869-amino-acid polypeptide reads, in one-letter code: Sodium-dependent phosphate transporter (869 aa).

Topologically, residues 1-18 are extracellular; that stretch reads MEAVAELSAPSLAGAPGE. Residues 19–39 traverse the membrane as a helical segment; the sequence is YTWIVAVAGVTCFLTAFAIGA. Residues 40–54 are Cytoplasmic-facing; the sequence is NDVANTFSSSVGSRA. Residues 55–75 traverse the membrane as a helical segment; it reads IPLWAAIGMSAVLETVGATLL. Topologically, residues 76–97 are extracellular; sequence GGAVTDSIRSKIIDFEVFRETP. The helical transmembrane segment at 98–118 threads the bilayer; sequence SILMTGMLCALVGAGLWLFLA. Over 119-120 the chain is Cytoplasmic; that stretch reads NH. A helical transmembrane segment spans residues 121 to 141; sequence LGLPVSTTHSIIGALLGFGLA. Residues 142–154 are Extracellular-facing; it reads SGNVRAVKWTQVA. The helical transmembrane segment at 155 to 175 threads the bilayer; sequence FIVGSWVAAPLAASAAGATIF. The Cytoplasmic segment spans residues 176–196; that stretch reads VCMRRLILRSRQPLRRAKRFL. Residues 197–217 form a helical membrane-spanning segment; the sequence is WIFIYLITLTFSVFLVFKNFF. At 218–250 the chain is on the extracellular side; that stretch reads ELNVSCDQMVAGGRVEHFEPCRISRWADAHSGT. A helical membrane pass occupies residues 251–271; it reads ALGIAVALSVALTFVISCLVY. At 272 to 720 the chain is on the cytoplasmic side; that stretch reads RFAFYRVESY…SGSADSEIGS (449 aa). Disordered regions lie at residues 286–312, 374–401, and 453–571; these read KRSS…GGLL, AAAA…GSSV, and SAFL…KRER. Residues 457–481 are compositionally biased toward low complexity; it reads SSPSSSVPPSSPSPSSTPSSPSASP. Positions 482–491 are enriched in pro residues; that stretch reads RRPPSRPPVP. Residues 492 to 509 show a composition bias toward low complexity; sequence RTCSPAPVSPSVPRAFAS. The span at 556–571 shows a compositional bias: basic and acidic residues; that stretch reads PHPERRDEVPAAKRER. Residues 721 to 741 form a helical membrane-spanning segment; that stretch reads PWYILLFGGLSMSLGLALLGY. Over 742–759 the chain is Extracellular; sequence RVIKTVGVKLVKITPARG. Residues 760 to 780 form a helical membrane-spanning segment; that stretch reads FSMELGAAWTVLIFSAIGIPL. Over 781–837 the chain is Cytoplasmic; sequence STTHCAVGSTVGVGLMEPKHPRRETGDGPVAEGEEPKKRAVQCPVINTASVNWKLFG. A helical transmembrane segment spans residues 838 to 858; the sequence is GVFVSWIITIAFSALVTAALF. Over 859–869 the chain is Extracellular; the sequence is SFAAYSPRMVS.

The protein belongs to the inorganic phosphate transporter (PiT) (TC 2.A.20) family.

It is found in the cell membrane. Its subcellular location is the vacuole membrane. It localises to the cytoplasmic vesicle membrane. The catalysed reaction is 2 Na(+)(out) + phosphate(out) = 2 Na(+)(in) + phosphate(in). Functionally, sodium-phosphate symporter which preferentially transports the monovalent form of phosphate with a stoichiometry of two sodium ions per phosphate ion. Plays a role in stabilizing the cytosolic pH and osmoregulation. May be required for optimal virulence of parasites in vivo. In Toxoplasma gondii (strain ATCC 50861 / VEG), this protein is Sodium-dependent phosphate transporter.